A 515-amino-acid chain; its full sequence is MSTQLRAAEISDIIESRIEKFGIKAEERTEGTILNIKDGIVRVYGLRDVMFGEMVEFPENTYGLAFNLERDSVGAVVMGPYEHLEEGMTARCTGRILEVPVGEALLGRVVDGLGKPIDGKGPIDTSETSPIEKVAPGVITRKSVDTSLPTGLKSIDAMVPIGRGQRELIIGDRQTGKTAIAIDTIINQKHTGVKCIYVAIGQKQSSVAAVVRKLEEHGAMEHTIVVNASASEAAALQYLAPYAGCTMGEYFRDRGQDALIVYDDLTKQAWAYRQISLLLRRPPGREAYPGDIFYLHSRLLERAAHVNEAYVKEFTKGKVTGKTGSLTALPIIETQAGDVSAFIPTNVISITDGQIYLDVNLFNAGIRPAINAGLSVSRVGGAAQTKIIKKLIGGLRIALAQYRELEAFSQFASDLDEATRKQLEHGQRVMEILKQPQYQPLSVGEMAIIWYVVNNNYLDQVELKKVVDFERSLLSFLRDQHQDLLDEINKNPNYSEKIIEKIKAVVEEFVKTQSY.

Residue 171 to 178 (GDRQTGKT) coordinates ATP.

The protein belongs to the ATPase alpha/beta chains family. F-type ATPases have 2 components, CF(1) - the catalytic core - and CF(0) - the membrane proton channel. CF(1) has five subunits: alpha(3), beta(3), gamma(1), delta(1), epsilon(1). CF(0) has three main subunits: a(1), b(2) and c(9-12). The alpha and beta chains form an alternating ring which encloses part of the gamma chain. CF(1) is attached to CF(0) by a central stalk formed by the gamma and epsilon chains, while a peripheral stalk is formed by the delta and b chains.

The protein localises to the cell inner membrane. It carries out the reaction ATP + H2O + 4 H(+)(in) = ADP + phosphate + 5 H(+)(out). Functionally, produces ATP from ADP in the presence of a proton gradient across the membrane. The alpha chain is a regulatory subunit. This Coxiella burnetii (strain CbuK_Q154) (Coxiella burnetii (strain Q154)) protein is ATP synthase subunit alpha.